The primary structure comprises 267 residues: Undecaprenyl-diphosphatase (267 aa).

8 helical membrane-spanning segments follow: residues 1 to 21, 39 to 59, 83 to 103, 111 to 131, 149 to 169, 189 to 209, 218 to 238, and 245 to 265; these read MSYF…FLPI, QGLA…VLYF, AKLA…GFVM, LRSA…LWYV, ALFI…RSGA, FLMS…KLVT, FLLT…HFFL, and GMTP…AFLL.

It belongs to the UppP family.

It is found in the cell inner membrane. The enzyme catalyses di-trans,octa-cis-undecaprenyl diphosphate + H2O = di-trans,octa-cis-undecaprenyl phosphate + phosphate + H(+). Functionally, catalyzes the dephosphorylation of undecaprenyl diphosphate (UPP). Confers resistance to bacitracin. In Vibrio cholerae serotype O1 (strain ATCC 39315 / El Tor Inaba N16961), this protein is Undecaprenyl-diphosphatase.